The primary structure comprises 509 residues: Maturase K (509 aa).

It belongs to the intron maturase 2 family. MatK subfamily.

It is found in the plastid. The protein localises to the chloroplast. Functionally, usually encoded in the trnK tRNA gene intron. Probably assists in splicing its own and other chloroplast group II introns. In Nicotiana paniculata, this protein is Maturase K.